A 429-amino-acid polypeptide reads, in one-letter code: 4-hydroxyphenylacetate degradation bifunctional isomerase/decarboxylase (429 aa).

2 Approximate repeats span residues M1–F215 and P216–K429. A divalent metal cation is bound by residues E276, E278, and D307.

Belongs to the FAH family. In terms of assembly, monomer. Mg(2+) serves as cofactor.

It catalyses the reaction (2E,4Z)-5-hydroxypenta-2,4-diene-1,2,5-tricarboxylate = (3E,5R)-5-carboxy-2-oxohept-3-enedioate. The catalysed reaction is (3E,5R)-5-carboxy-2-oxohept-3-enedioate + H(+) = (4Z)-2-oxohept-4-enedioate + CO2. Its pathway is aromatic compound metabolism; 4-hydroxyphenylacetate degradation; pyruvate and succinate semialdehyde from 4-hydroxyphenylacetate: step 4/7. It functions in the pathway aromatic compound metabolism; 4-hydroxyphenylacetate degradation; pyruvate and succinate semialdehyde from 4-hydroxyphenylacetate: step 5/7. Functionally, decarboxylates OPET (5-oxo-pent-3-ene-1,2,5-tricarboxylic acid) into HHDD (2-hydroxy-hept-2,4-diene-1,7-dioate) and isomerizes it to OHED (2-oxo-hept-3-ene-1,7-dioate). The protein is 4-hydroxyphenylacetate degradation bifunctional isomerase/decarboxylase (hpaG) of Escherichia coli.